The chain runs to 4059 residues: Fibrocystin (4059 aa).

Residues 1-18 (MMLAWLVSLLSMEVLLLA) form the signal peptide. Residues 19–3851 (KPYSSFQFEP…LPVASKERST (3833 aa)) lie on the Extracellular side of the membrane. Positions 25–109 (QFEPAEGSLA…AGPYSLEMRS (85 aa)) constitute an IPT/TIG 1; atypical domain. N-linked (GlcNAc...) asparagine glycosylation is found at N55 and N224. IPT/TIG domains follow at residues 135–230 (PVLY…FSVF) and 257–333 (PEIL…FEVG). In terms of domain architecture, PA14 spans 323 to 483 (AGNRGLRFEV…TWLNPDVVNT (161 aa)). 33 N-linked (GlcNAc...) asparagine glycosylation sites follow: N355, N385, N518, N527, N620, N639, N709, N867, N965, N975, N1082, N1114, N1133, N1239, N1273, N1308, N1319, N1344, N1373, N1456, N1471, N1528, N1613, N1627, N1694, N1760, N1775, N1875, N1879, N1915, N1955, N2030, and N2139. IPT/TIG domains lie at 945–997 (LVHF…FMLV) and 1017–1100 (PRLD…AFTY). Residues 1106-1190 (PVIVSLSRNR…IRSQGVDLYI (85 aa)) form the IPT/TIG 6; atypical domain. An IPT/TIG 7 domain is found at 1198-1266 (SVEPCSGSLL…RADVLTVLAS (69 aa)). The IPT/TIG 8; atypical domain occupies 1297–1378 (PVVTAMWGEF…MGFANMSVVP (82 aa)). An IPT/TIG 9 domain is found at 1385–1466 (PQIIAIFPTH…ITVLVNGLTS (82 aa)). IPT/TIG domains are found at residues 1482-1566 (PIVD…RNFF) and 1569-1637 (PQVL…IDVN). The IPT/TIG 12; atypical domain occupies 1654–1738 (PELLSVSRSQ…VLRATVTSVT (85 aa)). In terms of domain architecture, G8 1 spans 1928-2049 (HSWFPQRVPH…PEVTVTYLQA (122 aa)). PbH1 repeat units lie at residues 2244 to 2266 (TWGLKVDSNVFYKIVGHALLLGS) and 2287 to 2321 (EQGSTIRNNVIISVSAAEGLSGSEMLAPAGIYTFS). Residue N2380 is glycosylated (N-linked (GlcNAc...) asparagine). 2 PbH1 repeats span residues 2404–2426 (SNNLHLKNFQVYACRDFGIDILE) and 2459–2481 (RWELTISNTTFVNFDGNCVAIRT). N-linked (GlcNAc...) asparagine glycosylation is found at N2466, N2503, N2529, N2547, N2581, N2589, N2627, N2747, and N2762. A G8 2 domain is found at 2741 to 2867 (KGWGGYNHTI…PKKSWVHLGA (127 aa)). 2 PbH1 repeats span residues 3004-3026 (SAGSWVISSTVHQSCSVGIHASS) and 3027-3049 (SHGVILTDNVVFGTNGHGIDVEG). N3051 carries an N-linked (GlcNAc...) asparagine glycan. The stretch at 3080–3102 (AEDIILHGNVVAGSERLGFHVGG) is one PbH1 7 repeat. N-linked (GlcNAc...) asparagine glycans are attached at residues N3133 and N3162. One copy of the PbH1 8 repeat lies at 3188–3212 (TVQITLRNSVIVATSSSFDCIHDRK). N-linked (GlcNAc...) asparagine glycans are attached at residues N3218, N3719, and N3831. Residues 3852–3872 (IILALSLCSVASWVALSCLVC) form a helical membrane-spanning segment. Residues 3869-3886 (CLVCCWFKKSKTRKIKPE) form a ciliary targeting sequence (CST) region. Over 3873–4059 (CWFKKSKTRK…LHTAPPETIQ (187 aa)) the chain is Cytoplasmic. The span at 3885–3898 (PEDISESQAKEQKK) shows a compositional bias: basic and acidic residues. The interval 3885–3915 (PEDISESQAKEQKKNTHNSSKPRGLQAKTAK) is disordered. Positions 3946 to 3970 (KRKVSRLAVTEERTTTPAPKIPRIT) are nuclear localization signal (NLS). The disordered stretch occupies residues 4015–4038 (QERKQGQEPSQLDKGSDCTGLSQE).

As to quaternary structure, interacts with CAMLG. Interacts with PKD2. Interacts (via CST) with ARF4; this interaction allows an efficient PKHD1 trafficking to the cilium. Interacts (via CST) with RAB8A; this interaction controls trafficking through the endomembrane systeme and to the cilium. Interacts (via CST) with TULP3; this interaction allows PKHD1 trafficking to the cilium. In terms of processing, palmitoylated. Palmitoylation facilitates the trafficking to the cilia and membrane targeting. N-glycosylated. Post-translationally, several proteolytic cleavages occur within the extracellular domain, whereas at least one cleavage occurs within the cytoplasmic domain. Cleaved by a probable proprotein convertase which produces an extracellular domain (polyductin extracellular domain, (PECD)) and a C-terminal fragment (polyductin transmembrane fragment (PTM)) which are tethered together by disulfide bonds. This extracellular domain (PECD) is then shed from the primary cilium by activation of a member of the ADAM metalloproteinase disintegrins family, resulting in concomitant release of an intra-cellular C-terminal fragment (ICD) via a gamma-secretase-dependent process. The proteolytic cleavage of the C-terminal intracellular fragment (ICD) is controlled by cytosolic calcium concentration and activation of PKC. In terms of tissue distribution, expressed in bile ducts and distal nephron segments but is absent from the proximal tubule. Expressed in pancreas and kidney but also in the liver. Expressed primarily in the distal tubule and thick ascending limb of the loop of Henle, and at low-level in the proximal tubule before renal development is complete at P0.

It is found in the cell membrane. The protein localises to the cytoplasm. Its subcellular location is the apical cell membrane. It localises to the cytoskeleton. The protein resides in the cilium basal body. It is found in the cell projection. The protein localises to the cilium. Its subcellular location is the spindle. It localises to the chromosome. The protein resides in the centromere. It is found in the nucleus. The protein localises to the secreted. Its subcellular location is the extracellular exosome. It localises to the endoplasmic reticulum. The protein resides in the golgi apparatus. Promotes ciliogenesis in renal epithelial cells and therefore participates in the tubules formation and/or ensures the maintenance of the architecture of the lumen of the kidney. Has an impact on cellular symmetry by ensuring correct bipolar cell division through the regulation of centrosome duplication and mitotic spindle assembly and by maintaining oriented cell division (OCD) during tubular elongation through planar cell polarity (PCP) pathway. During epithelial cell morphogenesis, it also regulates cell-cell and cell-matrix adhesion and participates in cell motility. Promotes cell-cell contact through the positive regulation of PTK2 kinase activity leading to either positive regulation of epithelial cell proliferation through the HRAS/RAF1 pathways, or negative regulation of apoptosis through the PDK1/AKT1 pathway. May act in collecting-duct and biliary differentiation. May participate in the regulation of the cholangiocytes proliferation and the CCN2 production in an CXCL8-dependent manner. The polypeptide is Fibrocystin (Mus musculus (Mouse)).